Consider the following 166-residue polypeptide: NAD(P)H-quinone oxidoreductase subunit I, chloroplastic (166 aa).

4Fe-4S ferredoxin-type domains are found at residues 55 to 84 (GRIH…VDWK) and 95 to 124 (LNYS…MTEE). Residues Cys64, Cys67, Cys70, Cys74, Cys104, Cys107, Cys110, and Cys114 each coordinate [4Fe-4S] cluster.

The protein belongs to the complex I 23 kDa subunit family. As to quaternary structure, NDH is composed of at least 16 different subunits, 5 of which are encoded in the nucleus. [4Fe-4S] cluster serves as cofactor.

Its subcellular location is the plastid. It is found in the chloroplast thylakoid membrane. It catalyses the reaction a plastoquinone + NADH + (n+1) H(+)(in) = a plastoquinol + NAD(+) + n H(+)(out). It carries out the reaction a plastoquinone + NADPH + (n+1) H(+)(in) = a plastoquinol + NADP(+) + n H(+)(out). Its function is as follows. NDH shuttles electrons from NAD(P)H:plastoquinone, via FMN and iron-sulfur (Fe-S) centers, to quinones in the photosynthetic chain and possibly in a chloroplast respiratory chain. The immediate electron acceptor for the enzyme in this species is believed to be plastoquinone. Couples the redox reaction to proton translocation, and thus conserves the redox energy in a proton gradient. The chain is NAD(P)H-quinone oxidoreductase subunit I, chloroplastic from Silphium perfoliatum (Cup plant).